We begin with the raw amino-acid sequence, 244 residues long: NAD(P)H-quinone oxidoreductase subunit K (244 aa).

The [4Fe-4S] cluster site is built by Cys51, Cys52, Cys116, and Cys147.

It belongs to the complex I 20 kDa subunit family. In terms of assembly, NDH-1 can be composed of about 15 different subunits; different subcomplexes with different compositions have been identified which probably have different functions. [4Fe-4S] cluster serves as cofactor.

Its subcellular location is the cellular thylakoid membrane. The enzyme catalyses a plastoquinone + NADH + (n+1) H(+)(in) = a plastoquinol + NAD(+) + n H(+)(out). The catalysed reaction is a plastoquinone + NADPH + (n+1) H(+)(in) = a plastoquinol + NADP(+) + n H(+)(out). NDH-1 shuttles electrons from an unknown electron donor, via FMN and iron-sulfur (Fe-S) centers, to quinones in the respiratory and/or the photosynthetic chain. The immediate electron acceptor for the enzyme in this species is believed to be plastoquinone. Couples the redox reaction to proton translocation, and thus conserves the redox energy in a proton gradient. Cyanobacterial NDH-1 also plays a role in inorganic carbon-concentration. The polypeptide is NAD(P)H-quinone oxidoreductase subunit K (Synechococcus sp. (strain JA-3-3Ab) (Cyanobacteria bacterium Yellowstone A-Prime)).